Consider the following 100-residue polypeptide: Small ribosomal subunit protein uS14c (100 aa).

Belongs to the universal ribosomal protein uS14 family. In terms of assembly, part of the 30S ribosomal subunit.

The protein localises to the plastid. The protein resides in the chloroplast. In terms of biological role, binds 16S rRNA, required for the assembly of 30S particles. The sequence is that of Small ribosomal subunit protein uS14c from Nasturtium officinale (Watercress).